An 80-amino-acid polypeptide reads, in one-letter code: uncharacterized protein (80 aa).

A disordered region spans residues 57 to 80 (GNIDSDVSDQDQIGNPSAPISNQI).

This is an uncharacterized protein from Bacillus subtilis (strain 168).